The sequence spans 243 residues: MAGHSKWANIKHKKEKTDAQKGKLFTKLGRELMVVAKMYGPDPETNPKLRDVIAKAKANNMPMDKIMGFIKRAAGEIDTTGYEDITYEGYGPGGVAVIVEAMTNNRNRTAGELRHIFDKNGGNLGQTGCVSWMFSRKGVIVIEKESFPDEDFVMEKALEYGAEDFTSENGIYEIITSPEDFSKVREGLEKEGFTFIRAQIEMIPQTYVKLSSEDAQKMRRLIDMLEDNDDVKEVYHNWEEDEE.

This sequence belongs to the TACO1 family.

The protein localises to the cytoplasm. In Caldicellulosiruptor bescii (strain ATCC BAA-1888 / DSM 6725 / KCTC 15123 / Z-1320) (Anaerocellum thermophilum), this protein is Probable transcriptional regulatory protein Athe_0816.